The primary structure comprises 478 residues: Ankyrin repeat and BTB/POZ domain-containing protein 1 (478 aa).

2 ANK repeats span residues 1–31 and 35–64; these read MDTS…EVNV and WDST…RCEA. BTB domains are found at residues 115–182 and 272–346; these read SDVV…DIGV and PDIC…ELPP. Positions 451–477 form a coiled coil; the sequence is VQTYSAIEEAQQRLRALEDLLVSIGLD.

The protein localises to the cytoplasm. May act as a mediator of the PTEN growth-suppressive signaling pathway. May play a role in developmental processes. The polypeptide is Ankyrin repeat and BTB/POZ domain-containing protein 1 (Mus musculus (Mouse)).